Here is a 128-residue protein sequence, read N- to C-terminus: CD59 glycoprotein (128 aa).

The first 25 residues, 1-25, serve as a signal peptide directing secretion; it reads MGIQGGSVLFGLLLVLAVFCHSGNS. In terms of domain architecture, UPAR/Ly6 spans 26 to 108; it reads LQCYSCPYPT…ALKNGGTTLS (83 aa). Intrachain disulfides connect cysteine 28–cysteine 51, cysteine 31–cysteine 38, cysteine 44–cysteine 64, cysteine 70–cysteine 88, and cysteine 89–cysteine 94. The N-linked (GlcNAc...) asparagine glycan is linked to asparagine 43. Asparagine 102 carries GPI-anchor amidated asparagine lipidation. Positions 103-128 are cleaved as a propeptide — removed in mature form; that stretch reads GGTTLSKKTVLLLVIPFLVAAWSLHP.

In terms of assembly, interacts with T-cell surface antigen CD2. N- and O-glycosylated.

It is found in the cell membrane. Its subcellular location is the secreted. Functionally, potent inhibitor of the complement membrane attack complex (MAC) action, which protects self-cells from damage during complement activation. Acts by binding to the beta-haipins of C8 (C8A and C8B) components of the assembling MAC, forming an intermolecular beta-sheet that prevents incorporation of the multiple copies of C9 required for complete formation of the osmolytic pore. The chain is CD59 glycoprotein from Aotus trivirgatus (Three-striped night monkey).